We begin with the raw amino-acid sequence, 1415 residues long: DNA-directed RNA polymerase subunit beta' (1415 aa).

Cysteine 70, cysteine 72, cysteine 85, and cysteine 88 together coordinate Zn(2+). 3 residues coordinate Mg(2+): aspartate 461, aspartate 463, and aspartate 465. Zn(2+)-binding residues include cysteine 820, cysteine 894, cysteine 901, and cysteine 904.

It belongs to the RNA polymerase beta' chain family. The RNAP catalytic core consists of 2 alpha, 1 beta, 1 beta' and 1 omega subunit. When a sigma factor is associated with the core the holoenzyme is formed, which can initiate transcription. The cofactor is Mg(2+). Zn(2+) serves as cofactor.

The catalysed reaction is RNA(n) + a ribonucleoside 5'-triphosphate = RNA(n+1) + diphosphate. In terms of biological role, DNA-dependent RNA polymerase catalyzes the transcription of DNA into RNA using the four ribonucleoside triphosphates as substrates. The chain is DNA-directed RNA polymerase subunit beta' from Cupriavidus necator (strain ATCC 17699 / DSM 428 / KCTC 22496 / NCIMB 10442 / H16 / Stanier 337) (Ralstonia eutropha).